The following is a 477-amino-acid chain: uncharacterized protein (477 aa).

Residues 107 to 129 (VNFWSLSMACASVLALLGLVYLI) traverse the membrane as a helical segment.

It localises to the membrane. This is an uncharacterized protein from Treponema pallidum (strain Nichols).